A 781-amino-acid chain; its full sequence is Isoquinoline 1-oxidoreductase subunit beta (781 aa).

Heterodimer of an alpha chain and a beta chain.

It carries out the reaction isoquinoline + A + H2O = isoquinolin-1(2H)-one + AH2. Specific towards N-containing N-heterocyclic substrates, including isoquinoline, isoquinolin-5-ol, phthalazine and quinazoline. This Brevundimonas diminuta (Pseudomonas diminuta) protein is Isoquinoline 1-oxidoreductase subunit beta (iorB).